Here is a 316-residue protein sequence, read N- to C-terminus: uncharacterized protein (316 aa).

Position 126 (T126) interacts with substrate. Y149 (proton acceptor) is an active-site residue.

Belongs to the NAD(P)-dependent epimerase/dehydratase family.

This is an uncharacterized protein from Bacillus subtilis (strain 168).